Here is a 115-residue protein sequence, read N- to C-terminus: MNLERLNEIEKPLLHIVKHDVVPALGCTEPISLALASATAAKYLGKTPERIEVKVSPNLMKNGLGVAVPGTGMVGLPIAAAMKVLSNTILIELLIISALLHQKVCSISTDRLSKL.

It belongs to the UPF0597 family.

The sequence is that of UPF0597 protein NTHI1023 from Haemophilus influenzae (strain 86-028NP).